The chain runs to 294 residues: UDP-3-O-acyl-N-acetylglucosamine deacetylase (294 aa).

3 residues coordinate Zn(2+): His75, His232, and Asp236. His259 serves as the catalytic Proton donor.

The protein belongs to the LpxC family. Zn(2+) is required as a cofactor.

It carries out the reaction a UDP-3-O-[(3R)-3-hydroxyacyl]-N-acetyl-alpha-D-glucosamine + H2O = a UDP-3-O-[(3R)-3-hydroxyacyl]-alpha-D-glucosamine + acetate. The protein operates within glycolipid biosynthesis; lipid IV(A) biosynthesis; lipid IV(A) from (3R)-3-hydroxytetradecanoyl-[acyl-carrier-protein] and UDP-N-acetyl-alpha-D-glucosamine: step 2/6. Catalyzes the hydrolysis of UDP-3-O-myristoyl-N-acetylglucosamine to form UDP-3-O-myristoylglucosamine and acetate, the committed step in lipid A biosynthesis. In Campylobacter jejuni (strain RM1221), this protein is UDP-3-O-acyl-N-acetylglucosamine deacetylase.